We begin with the raw amino-acid sequence, 217 residues long: Large ribosomal subunit protein uL1 (217 aa).

Tyrosine 11 is modified (phosphotyrosine). N6-acetyllysine occurs at positions 91 and 106. Position 118 is an N6-acetyllysine; alternate (lysine 118). A Glycyl lysine isopeptide (Lys-Gly) (interchain with G-Cter in SUMO1); alternate cross-link involves residue lysine 118. Lysine 118 is covalently cross-linked (Glycyl lysine isopeptide (Lys-Gly) (interchain with G-Cter in SUMO2); alternate). Lysine 161 participates in a covalent cross-link: Glycyl lysine isopeptide (Lys-Gly) (interchain with G-Cter in SUMO2).

It belongs to the universal ribosomal protein uL1 family. Component of the large ribosomal subunit.

Its subcellular location is the cytoplasm. Functionally, component of the large ribosomal subunit. The ribosome is a large ribonucleoprotein complex responsible for the synthesis of proteins in the cell. The protein is Large ribosomal subunit protein uL1 (RPL10A) of Oryctolagus cuniculus (Rabbit).